We begin with the raw amino-acid sequence, 420 residues long: Probable glycosyltransferase YdaM (420 aa).

Transmembrane regions (helical) follow at residues 4–24 (TLFFISLSLIWVMLLYHMFLM), 299–319 (IIFDLFYFFFTYFLFFFGVIM), 332–352 (LHLSVGFLAMILWILAFFLFM), and 371–391 (FFIVFLMYFTYSQAWIVLVIY).

Belongs to the glycosyltransferase 2 family.

The protein localises to the cell membrane. The protein is Probable glycosyltransferase YdaM (ydaM) of Bacillus subtilis (strain 168).